We begin with the raw amino-acid sequence, 89 residues long: Small ribosomal subunit protein uS14A (89 aa).

It belongs to the universal ribosomal protein uS14 family. In terms of assembly, part of the 30S ribosomal subunit. Contacts proteins S3 and S10.

Functionally, binds 16S rRNA, required for the assembly of 30S particles and may also be responsible for determining the conformation of the 16S rRNA at the A site. The protein is Small ribosomal subunit protein uS14A of Staphylococcus aureus (strain Newman).